The sequence spans 442 residues: tRNA modification GTPase MnmE (442 aa).

Residues R24, E82, and K120 each contribute to the (6S)-5-formyl-5,6,7,8-tetrahydrofolate site. Residues 217–367 (GLHIVITGEP…LISLIKKKAE (151 aa)) enclose the TrmE-type G domain. GTP is bound by residues 227-232 (NVGKST), 246-252 (SEYAGTT), and 271-274 (DTAG). S231 serves as a coordination point for Mg(2+). S246 contributes to the K(+) binding site. T252 contributes to the Mg(2+) binding site. Residue K442 coordinates (6S)-5-formyl-5,6,7,8-tetrahydrofolate.

This sequence belongs to the TRAFAC class TrmE-Era-EngA-EngB-Septin-like GTPase superfamily. TrmE GTPase family. As to quaternary structure, homodimer. Heterotetramer of two MnmE and two MnmG subunits. Requires K(+) as cofactor.

The protein localises to the cytoplasm. Exhibits a very high intrinsic GTPase hydrolysis rate. Involved in the addition of a carboxymethylaminomethyl (cmnm) group at the wobble position (U34) of certain tRNAs, forming tRNA-cmnm(5)s(2)U34. In Wolbachia pipientis subsp. Culex pipiens (strain wPip), this protein is tRNA modification GTPase MnmE.